Here is a 2237-residue protein sequence, read N- to C-terminus: Activating signal cointegrator 1 complex subunit 3-like (2237 aa).

Disordered regions lie at residues 1–48, 71–118, 242–330, and 445–472; these read MSEE…RGEM, TIEK…KPID, DEEE…SKLI, and EKTI…DEIK. Over residues 24–37 the composition is skewed to basic and acidic residues; sequence ERNRSELKEPKGEP. The span at 79–97 shows a compositional bias: polar residues; the sequence is VNSSNDTYSTTKKVKNQNP. The segment covering 105–114 has biased composition (low complexity); sequence RKSNGNNNNE. Positions 242–282 are enriched in acidic residues; the sequence is DEEEEEENLSDFEIRDDDDDDDDVDNNEVDDNNNNDSEAQD. Composition is skewed to basic and acidic residues over residues 312–325 and 446–460; these read QKPD…DKNN and KTIE…DVEM. Residues 440 to 468 adopt a coiled-coil conformation; sequence TAATTEKTIEKTESNKKDVEMKQQQQQQQ. Residues 561-745 form the Helicase ATP-binding 1 domain; it reads DCAFKTDNNL…FLRVEPDGVF (185 aa). 574-581 contributes to the ATP binding site; it reads APTSSGKT. A DEAH box motif is present at residues 687–690; that stretch reads DEIH. The 236-residue stretch at 755–990 folds into the Helicase C-terminal 1 domain; the sequence is PLEQQYIGIS…TVRDAVNWLG (236 aa). The SEC63 1 domain occupies 1050–1356; sequence STELGKVASH…GAEYSLPISF (307 aa). The Helicase ATP-binding 2 domain maps to 1407 to 1584; the sequence is NCMYQSNDNA…WIGATPQTCY (178 aa). 1420 to 1427 is a binding site for ATP; sequence APTNSGKT. Positions 1526 to 1529 match the DEAH box motif; it reads DELH. The region spanning 1657-1832 is the Helicase C-terminal 2 domain; that stretch reads TLTKPYLVCE…TITKKQDALD (176 aa). Residues 1892-2215 form the SEC63 2 domain; it reads PLNLGIIASY…GCDQEHELNI (324 aa).

It belongs to the helicase family.

This Dictyostelium discoideum (Social amoeba) protein is Activating signal cointegrator 1 complex subunit 3-like (ascc3l).